Reading from the N-terminus, the 189-residue chain is Adenylate kinase (189 aa).

Residue 11-16 (GSGKGT) coordinates ATP. Residues 31-60 (STGDVLRAEIKNGTELGKTAKGYIDQGQLI) are NMP. Residues Thr32, Arg37, 58-60 (QLI), 86-89 (GFPR), and Gln93 contribute to the AMP site. The segment at 127–137 (KRGKDSGRADD) is LID. Arg128 provides a ligand contact to ATP. The AMP site is built by Arg134 and Arg145. Residue Gly173 coordinates ATP.

It belongs to the adenylate kinase family. Monomer.

It localises to the cytoplasm. The enzyme catalyses AMP + ATP = 2 ADP. It functions in the pathway purine metabolism; AMP biosynthesis via salvage pathway; AMP from ADP: step 1/1. In terms of biological role, catalyzes the reversible transfer of the terminal phosphate group between ATP and AMP. Plays an important role in cellular energy homeostasis and in adenine nucleotide metabolism. This chain is Adenylate kinase, found in Bacteroides thetaiotaomicron (strain ATCC 29148 / DSM 2079 / JCM 5827 / CCUG 10774 / NCTC 10582 / VPI-5482 / E50).